Here is a 176-residue protein sequence, read N- to C-terminus: KxDL motif-containing protein 1 (176 aa).

Met-1 is modified (N-acetylmethionine). A disordered region spans residues 95–176 (HPEAFSHIPE…HTDDEEMPGE (82 aa)). Residues 119-131 (STTTTIATSEQST) show a composition bias toward low complexity. Over residues 132–145 (GSCDTSPDTVSPSL) the composition is skewed to polar residues.

This sequence belongs to the KXD1 family. Component of the BLOC-one-related complex (BORC) which is composed of BLOC1S1, BLOC1S2, BORCS5, BORCS6, BORCS7, BORCS8, KXD1 and SNAPIN. Associates with the BLOC-1 complex. Interacts with BLOC1S1. Interacts with DTNBP1/BLOC1S7 (via coiled-coil domain).

The protein localises to the lysosome membrane. As part of the BORC complex may play a role in lysosomes movement and localization at the cell periphery. Associated with the cytosolic face of lysosomes, the BORC complex may recruit ARL8B and couple lysosomes to microtubule plus-end-directed kinesin motor. May also be involved in the biogenesis of lysosome-related organelles such as melanosomes. The protein is KxDL motif-containing protein 1 (KXD1) of Bos taurus (Bovine).